We begin with the raw amino-acid sequence, 142 residues long: Large ribosomal subunit protein uL13 (142 aa).

Belongs to the universal ribosomal protein uL13 family. Part of the 50S ribosomal subunit.

Its function is as follows. This protein is one of the early assembly proteins of the 50S ribosomal subunit, although it is not seen to bind rRNA by itself. It is important during the early stages of 50S assembly. The polypeptide is Large ribosomal subunit protein uL13 (Pasteurella multocida (strain Pm70)).